We begin with the raw amino-acid sequence, 510 residues long: Glutamate--tRNA ligase (510 aa).

Residues 15–25 (PSPTGDPHVGT) carry the 'HIGH' region motif. Residues 256–260 (KISKR) carry the 'KMSKS' region motif. An ATP-binding site is contributed by lysine 259.

This sequence belongs to the class-I aminoacyl-tRNA synthetase family. Glutamate--tRNA ligase type 1 subfamily. In terms of assembly, monomer.

The protein resides in the cytoplasm. It catalyses the reaction tRNA(Glu) + L-glutamate + ATP = L-glutamyl-tRNA(Glu) + AMP + diphosphate. Catalyzes the attachment of glutamate to tRNA(Glu) in a two-step reaction: glutamate is first activated by ATP to form Glu-AMP and then transferred to the acceptor end of tRNA(Glu). The polypeptide is Glutamate--tRNA ligase (Fusobacterium nucleatum subsp. nucleatum (strain ATCC 25586 / DSM 15643 / BCRC 10681 / CIP 101130 / JCM 8532 / KCTC 2640 / LMG 13131 / VPI 4355)).